Reading from the N-terminus, the 781-residue chain is DEAD-box ATP-dependent RNA helicase 50 (781 aa).

5 disordered regions span residues 72–103 (EFAP…LTAS), 117–148 (GKVT…DEGF), 166–240 (IPRS…KGDR), 254–292 (GRAI…REDR), and 313–342 (YNPR…RGWG). Residues 79–88 (SDLLSSIPSE) are compositionally biased toward low complexity. Residues 130-143 (EEEDEDDASDENYS) show a composition bias toward acidic residues. Residues 171 to 197 (KSAERNEVKRASKVRESRESRRDLDRL) are compositionally biased toward basic and acidic residues. The segment covering 198 to 208 (EGDDEDVDEVS) has biased composition (acidic residues). Over residues 216–226 (NQRAGSRSSYS) the composition is skewed to polar residues. Residues 254–274 (GRAIDEVSNPRKFNDNERAES) are compositionally biased toward basic and acidic residues. The segment covering 275–286 (RSSYSRDSSANS) has biased composition (low complexity). The segment covering 313–325 (YNPRRFTDNERGL) has biased composition (basic and acidic residues). The Q motif signature appears at 374–402 (KTFAEIGCSEDMMKALKEQNFDRPAHIQA). A Helicase ATP-binding domain is found at 405-586 (FSPVIDGKSC…VEVFPDCEVV (182 aa)). 418–425 (DQSGSGKT) is an ATP binding site. Residues 533 to 536 (DEVD) carry the DEAD box motif. In terms of domain architecture, Helicase C-terminal spans 621 to 781 (NKKTALLQIM…DVPNAYEFTT (161 aa)).

This sequence belongs to the DEAD box helicase family.

The catalysed reaction is ATP + H2O = ADP + phosphate + H(+). In terms of biological role, probably involved in resistance to biotic and abiotic stresses. The protein is DEAD-box ATP-dependent RNA helicase 50 (RH50) of Arabidopsis thaliana (Mouse-ear cress).